A 76-amino-acid polypeptide reads, in one-letter code: Small ribosomal subunit protein bS18 (76 aa).

This sequence belongs to the bacterial ribosomal protein bS18 family. Part of the 30S ribosomal subunit. Forms a tight heterodimer with protein bS6.

Its function is as follows. Binds as a heterodimer with protein bS6 to the central domain of the 16S rRNA, where it helps stabilize the platform of the 30S subunit. In Aeromonas hydrophila subsp. hydrophila (strain ATCC 7966 / DSM 30187 / BCRC 13018 / CCUG 14551 / JCM 1027 / KCTC 2358 / NCIMB 9240 / NCTC 8049), this protein is Small ribosomal subunit protein bS18.